Here is a 293-residue protein sequence, read N- to C-terminus: Protease HtpX (293 aa).

Helical transmembrane passes span 4 to 24 and 34 to 54; these read IALFLITNLAVMLVFGLVLSL and GLMIMAGLFGFGGAFVSLLMS. His-139 is a binding site for Zn(2+). Residue Glu-140 is part of the active site. His-143 contacts Zn(2+). The next 2 membrane-spanning stretches (helical) occupy residues 158-178 and 193-213; these read IVNTFVIFISRLIAQVVSGFL and MVYFAVATVLELVFGILASII. Residue Glu-222 participates in Zn(2+) binding.

It belongs to the peptidase M48B family. The cofactor is Zn(2+).

It is found in the cell inner membrane. The protein is Protease HtpX of Pectobacterium atrosepticum (strain SCRI 1043 / ATCC BAA-672) (Erwinia carotovora subsp. atroseptica).